We begin with the raw amino-acid sequence, 969 residues long: RNA polymerase-associated protein RapA (969 aa).

Residues 164-334 enclose the Helicase ATP-binding domain; it reads EVGRRHAPRV…FARLRLLDSD (171 aa). ATP is bound at residue 177–184; the sequence is DEVGLGKT. Residues 280–283 carry the DEAH box motif; that stretch reads DEAH. Residues 492 to 668 enclose the Helicase C-terminal domain; sequence RVNWLLEKLK…GSNEALNDVI (177 aa).

Belongs to the SNF2/RAD54 helicase family. RapA subfamily. Interacts with the RNAP. Has a higher affinity for the core RNAP than for the holoenzyme. Its ATPase activity is stimulated by binding to RNAP.

Transcription regulator that activates transcription by stimulating RNA polymerase (RNAP) recycling in case of stress conditions such as supercoiled DNA or high salt concentrations. Probably acts by releasing the RNAP, when it is trapped or immobilized on tightly supercoiled DNA. Does not activate transcription on linear DNA. Probably not involved in DNA repair. This is RNA polymerase-associated protein RapA from Vibrio vulnificus (strain YJ016).